Here is a 200-residue protein sequence, read N- to C-terminus: Kunitz type trypsin inhibitor 111 (200 aa).

An N-terminal signal peptide occupies residues 1–24; sequence MSTISFTIFILANVWLLVVTTSIA. Disulfide bonds link C62–C108, C160–C172, and C165–C168.

This sequence belongs to the protease inhibitor I3 (leguminous Kunitz-type inhibitor) family. Interacts with SCP1.

It is found in the secreted. The protein resides in the extracellular space. Its subcellular location is the apoplast. This chain is Kunitz type trypsin inhibitor 111 (KPI111), found in Medicago truncatula (Barrel medic).